A 494-amino-acid polypeptide reads, in one-letter code: MFNYSGLNEECGVFGIWNHPEAAQLTYMGLHSLQHRGQEGAGIVVSDQNELKGERGLGLLTEAIKDDQMERLKGYQHAIGHVRYATSGNKGIENIQPLLYHFYDMSVGICHNGNLINAKSLRQNLEKQGAIFHSSSDTEVIMHLIRRSKAPTFEEALKESLRKIKGGFTFAILTKDALYGAVDPNAIRPLVVGKMKDGTYILASETCAIDVLGAEFVQDIHAGEYVVINDKGITVKSYTHHTTTAISAMEYIYFARPDSTIAGKNVHAVRKASGKMLAQESPVKADMVIGVPNSSLSAASGYAEEIGLPYEMGLVKNQYVARTFIQPTQELREQGVRVKLSAVKDIVDGKNIILVDDSIVRGTTIRRIVKMLKDSGANKVHVRIASPEFMFPSFYGIDVSTTAELISASKSPEEIKDYIGADSLAYLSVDGLIESIGLDYDAPYSGLCVESFTGDYPAGLYDYEANYKAHLSHRQKQYISKNKHYFDSEGNLNV.

Residues 1–10 constitute a propeptide that is removed on maturation; that stretch reads MFNYSGLNEE. The active-site Nucleophile is cysteine 11. The Glutamine amidotransferase type-2 domain occupies 11–231; the sequence is CGVFGIWNHP…AGEYVVINDK (221 aa). Positions 294, 356, and 357 each coordinate Mg(2+).

The protein in the C-terminal section; belongs to the purine/pyrimidine phosphoribosyltransferase family. The cofactor is Mg(2+).

It catalyses the reaction 5-phospho-beta-D-ribosylamine + L-glutamate + diphosphate = 5-phospho-alpha-D-ribose 1-diphosphate + L-glutamine + H2O. The protein operates within purine metabolism; IMP biosynthesis via de novo pathway; N(1)-(5-phospho-D-ribosyl)glycinamide from 5-phospho-alpha-D-ribose 1-diphosphate: step 1/2. In terms of biological role, catalyzes the formation of phosphoribosylamine from phosphoribosylpyrophosphate (PRPP) and glutamine. This Staphylococcus aureus (strain MRSA252) protein is Amidophosphoribosyltransferase.